The following is a 2559-amino-acid chain: MAVSYTNFTNLPAKLYLVYRACTFTPLHAENLASNITQAMKQLLAQPDACVKDIDIFSPFNEITVSRWNAEIQEAPDASLLEVIRGHSRYRPSHTAIHAWDGTVSYSELDVTSTKWAIYLQSQGVKAGCLVPIMMDHSKWAVIGQLAILKAGGAFVPLDPGQPLFRLENIVRLTTESHISLSSPHLANRLHGLVETVLVISDERTESLPKANAHHDAADISPVVNNGPAYVLFTSGSTGRPKGCVVGYGALSDVVNQTTALKIGPDSRVLQFASYTYGMSLIEIYCTLAAGATICVPSEDDRLNALSSILLSMQVTWAILTPSTTISIADAVVCLNTLVVAGEALTMDRLHSLADKTEVIQAFGLTEWAGICCVSQRITSETDLRVIGRSHTARLRLVDPANYNRLAPVGAVAELLIEGPAMADGYLGDPEQTARAFPKTSTGGRFYRTGDLVQYAADGSLRYVSRKDSQVKIRGMRVELTEVEYQIRRAFPGVEEVVVEAAAPKNSSGIPILVAFLCPEDLSGLVCTIKETMKRSLPDYMRPSVYVPLEFIPKTISRKVDRKALRHLVQSSTRHELERYTQASLPSLVGPRTNIEQLVHELVADMLRLDPLSLGMRQNFISLGGDSVTAMLLVNKLRRKGYKITVAAILRAQSLLDVASLVHYPAGLEPSAQKSTPGDLKLVPRAIHRISDSGTVEQSFSQARIWFLQTLRPSSTWLLLPSATRLRGSLRVDALETAFSALVERHETLRTTFEDREGSGVQVVAPFHPYQLEIIEIPSGSDADLITALHGQQIRPMDLTKECWRATLFRLSPDEHVLNIVLHHIICDGWSFDIFLKTLQIYYAAALQGHSPLEGVEPLPIQYRDFSIWQRQNKARTSVEQLAYWVRQLDGSQPAEFLCDKKRPHMLSGKAGSQPVKIDVCLYHDVKRFCSMKHVTPFTVLFAAFRATHYRLTGASDATIGIPSVSRPQAELEELIGYFGNVQCIRTKVESCSSSFQLLVHQVQSSITAAFENQDVPFDQIVSKLLKDRDVSRHPLVQVAFILHTQAQFGKLRLEGLESEQLPLPHVSRLDLEFHLYPGEGGGDLQGEVLYSMDLFHAETINAMVLVFYDILREGIRKPDTSIDSLPFPGGYSILNERGLIYPQQSRSLSIIDLFDEQVRAQTDEVAVKDINGHLTYSELHKRSSMLSAWLKNSYSFAEETPVGVYASRSCESIVAILGILRAGLAYIRLDIDAPKARTEMILSCLPNCRLVLVASGLEPPRVCVQGVQFAYIADSCKETVTDVHDFLKTCTPPGPMSLAYIVFTSGTTGTPKGVMIEHHGVANLAKEPDIIAHAVNSRIASHMLNPSFDASGFEIYATLLNGGTLVCIDNSVVFDFPALGATFIQHGIRRAFMTPAILKQTLASCNSLLRMLDILYVGGDKLDPGDVAKVQRLTTGRVQIFNCYGPTENSIVSTKYRVPVDEEGVNGVPIGRSISNIGAYVVDRSLRLLPLGVLGELVVTGPALARGYIDPKHDIGRFIELDISEEVAPMRAYRTGDMVRYRPRDAQLEFFGRMDQQVKVRGYRVELAEIDNTLLLSPFISAAVTVARQDQELVSFVTVSDMASGFNDRAETEHVDSWLDVVEGEDYYGSVGTIEPHSLGADFLGWISMYDGEPIDKNDMREWLQDTITAILSCSPSSVLEIGTGSGMILFNIIGSIQKYVGLEPSPRAVDFVRRAVHWVPEAAGKVNIKCGTASDIGRLQDMGTLDLAVINSVAQYFPSLDYLRNTIKDLVRQGVKSIFLGDIRSYALYQEFQVSKVLRLYGRGLTITRFRQHMAEIARLEKELLVDPAFFTSLPAELPGMIEHVEIWPKRMKATNELSCYRYTAVLHVKRAEQPLLIREVKEISWADFQAKGWDYNSLSQMLEISDASTVLAVENIPFKKTIVERDMVRLLQELPEDTGSVSWSSNARGPKRALAPIDLFDVAKKTGWDIEISWARQRSQRGGLDAVFHRQGPRVLFRFPVDPYIPGACSNDPLSPQRNRLLEKHLLEYMSTKLPTYMVPKLIHVLDKMPINNIGKVDRHVLAQRAAITSATISESESLFRREIEPAFTSEIERAVWEEFTGVLGREVGVADSFFRNGGHSLMAIRLVSRINKRLSSALSVSELFRYPTVSGLAQHLQGLGALETRAVTVYAPFSLLDRPYDPSEVRLPPEADIVDVTPVTECQAWFLQCWSLVSHSFIIHGVLDVDRLRAACQAVVRHHPPLRTVFTEFQTQLVQAFDGVSLSAILYDIARAYGNSASPLSNAVPFSHHLHMCRSTRPDALAFWKAYLRDAVLTEVPRPEEVNATNEKPLEIIQQEALGEVSLPSTVDITFSTLVNAAIALALARLVQRNDVIFACVMTSRGVLAELAESVVGPCVNRCLLRVKVPDDSNPDSTALDFCRNLRDNQAQVSGHGHLGFRDVVENCTSWASLGVDVGRIAFVTHLPAETALETFSLTLLDSPVSYDSTNVTINPGNQILVRSAITDEQQACIQVLSSSNVMGAEKALFLANRILMIAQRLSVSVSGGRSPRLLELDK.

The interval 90–474 (YRPSHTAIHA…SRKDSQVKIR (385 aa)) is adenylation 1. The region spanning 593-669 (TNIEQLVHEL…SLVHYPAGLE (77 aa)) is the Carrier 1 domain. Ser-627 is subject to O-(pantetheine 4'-phosphoryl)serine. Positions 695–989 (TVEQSFSQAR…GNVQCIRTKV (295 aa)) are condensation 1. The segment at 1155-1562 (FDEQVRAQTD…GRMDQQVKVR (408 aa)) is adenylation 2. Residues 1681–1776 (LEIGTGSGMI…NTIKDLVRQG (96 aa)) form a methyltransferase region. The 75-residue stretch at 2090-2164 (AFTSEIERAV…GLAQHLQGLG (75 aa)) folds into the Carrier 2 domain. Ser-2124 is subject to O-(pantetheine 4'-phosphoryl)serine. Residues 2261-2409 (FDGVSLSAIL…VNRCLLRVKV (149 aa)) form a condensation 2 region.

This sequence belongs to the NRP synthetase family.

The catalysed reaction is O-methyl-L-tyrosine + anthranilate + S-adenosyl-L-methionine + 2 ATP = (-)-4'-methoxycyclopeptine + 2 AMP + S-adenosyl-L-homocysteine + 2 diphosphate + 2 H(+). The enzyme catalyses anthranilate + L-phenylalanine + S-adenosyl-L-methionine + 2 ATP = cyclopeptine + 2 AMP + S-adenosyl-L-homocysteine + 2 diphosphate + 2 H(+). The protein operates within secondary metabolite biosynthesis. Its pathway is alkaloid biosynthesis. It participates in mycotoxin biosynthesis. Functionally, nonribosomal peptide synthetase; part of the gene cluster that mediates the biosynthesis of the aspoquinolone mycotoxins. The first stage is catalyzed by the nonribosomal peptide synthetase asqK that condenses anthranilic acid and O-methyl-L-tyrosine to produce 4'-methoxycyclopeptin. AsqK is also able to use anthranilic acid and L-phenylalanine as substrates to produce cyclopeptin, but at a tenfold lower rate. Within the pathway, 4'-methoxycyclopeptin is then converted to 4'-methoxydehydrocyclopeptin by the ketoglutarate-dependent dioxygenase asqJ. AsqJ also converts its first product 4'-methoxydehydrocyclopeptin to 4'-methoxycyclopenin. The following conversion of 4'-methoxycyclopenin into 4'-methoxyviridicatin is catalyzed by the cyclopenase asqI. 4'-methoxyviridicatin is the precursor of quinolone natural products, and is further converted to quinolinone B. The prenyltransferase asqH1 then catalyzes the canonical Friedel-Crafts alkylation of quinolinone B with dimethylallyl cation to yield dimethylallyl quinolone, which is subjected to FAD-dependent dehydrogenation by the FAD-linked oxidoreductase asqF to yield conjugated aryl diene. The delta(3') double bond then serves as the site of the second alkylation with DMAPP catalyzed by the prenyltransferase asqH2 to yield a carbenium ion intermediate, which can be attacked by H(2)O to yield a styrenyl quinolone containing a C3'-hydroxyprenyl chain. The FAD-dependent monooxygenase asqG performs epoxidation of the terminal C7'-C8' olefin. Finally, after dehydratation of the epoxide at C3 by asqC, the quinolone epoxide rearrangement protein asqO catalyzes an enzymatic 3-exo-tet cyclization to yield the cyclopropyl-THF ring system in aspoquinolone. The chain is Nonribosomal peptide synthetase asqK from Emericella nidulans (strain FGSC A4 / ATCC 38163 / CBS 112.46 / NRRL 194 / M139) (Aspergillus nidulans).